The chain runs to 409 residues: Argininosuccinate synthase (409 aa).

10–18 contributes to the ATP binding site; that stretch reads AYSGGLDTS. Tyrosine 87 is a binding site for L-citrulline. Glycine 117 contacts ATP. Residues threonine 119, asparagine 123, and aspartate 124 each contribute to the L-aspartate site. An L-citrulline-binding site is contributed by asparagine 123. 5 residues coordinate L-citrulline: arginine 127, serine 175, serine 184, glutamate 260, and tyrosine 272.

This sequence belongs to the argininosuccinate synthase family. Type 1 subfamily. Homotetramer.

It is found in the cytoplasm. It catalyses the reaction L-citrulline + L-aspartate + ATP = 2-(N(omega)-L-arginino)succinate + AMP + diphosphate + H(+). Its pathway is amino-acid biosynthesis; L-arginine biosynthesis; L-arginine from L-ornithine and carbamoyl phosphate: step 2/3. This is Argininosuccinate synthase from Rubrobacter xylanophilus (strain DSM 9941 / JCM 11954 / NBRC 16129 / PRD-1).